A 359-amino-acid chain; its full sequence is DNA replication and repair protein RecF (359 aa).

Glycine 30–threonine 37 provides a ligand contact to ATP.

It belongs to the RecF family.

Its subcellular location is the cytoplasm. Functionally, the RecF protein is involved in DNA metabolism; it is required for DNA replication and normal SOS inducibility. RecF binds preferentially to single-stranded, linear DNA. It also seems to bind ATP. This is DNA replication and repair protein RecF from Protochlamydia amoebophila (strain UWE25).